Reading from the N-terminus, the 134-residue chain is Small ribosomal subunit protein uS8c (134 aa).

Belongs to the universal ribosomal protein uS8 family. In terms of assembly, part of the 30S ribosomal subunit.

It localises to the plastid. It is found in the chloroplast. In terms of biological role, one of the primary rRNA binding proteins, it binds directly to 16S rRNA central domain where it helps coordinate assembly of the platform of the 30S subunit. The protein is Small ribosomal subunit protein uS8c (rps8) of Vitis vinifera (Grape).